A 252-amino-acid polypeptide reads, in one-letter code: MTQFPQTLRAGATALALVMGLALPAAAGEVIAAVAANFTEPAKEIGALFTEKTGHTVTYAFGPSGQFYTQITQGAPFEVFLSADASRPKKAVEEGYAVPGSDFTYAVGKLVLWSADPARVDDKGAVLKTDLEHVAIADPKSAPYGAAAIEVMQKLGVYETLEPKLVTGKSISQAYEFAATGNAPVGFVAYSQVIGKEGGSSWMVPQDLYKPIKQDAVLLKTGAEDAAAKAYLDFLKTPEALEIIRKYGYVTE.

An N-terminal signal peptide occupies residues 1–27 (MTQFPQTLRAGATALALVMGLALPAAA). The molybdate site is built by Ser64, Ile171, and Tyr190.

It belongs to the bacterial solute-binding protein ModA family. As to quaternary structure, the complex is composed of two ATP-binding proteins (ModC), two transmembrane proteins (ModB) and a solute-binding protein (ModA).

The protein resides in the periplasm. Its function is as follows. Involved in the transport of molybdenum into the cell. This is Molybdate-binding protein ModA (modA) from Rhodobacter capsulatus (Rhodopseudomonas capsulata).